The chain runs to 165 residues: Large ribosomal subunit protein uL10 (165 aa).

The protein belongs to the universal ribosomal protein uL10 family. As to quaternary structure, part of the ribosomal stalk of the 50S ribosomal subunit. The N-terminus interacts with L11 and the large rRNA to form the base of the stalk. The C-terminus forms an elongated spine to which L12 dimers bind in a sequential fashion forming a multimeric L10(L12)X complex.

In terms of biological role, forms part of the ribosomal stalk, playing a central role in the interaction of the ribosome with GTP-bound translation factors. The chain is Large ribosomal subunit protein uL10 from Mycoplasmopsis synoviae (strain 53) (Mycoplasma synoviae).